The sequence spans 315 residues: Cobalamin biosynthesis protein CobD (315 aa).

The next 5 helical transmembrane spans lie at 54–74 (GLLF…ILFL), 78–98 (IAYW…LAMT), 152–172 (ADGV…LALM), 203–223 (IANF…SFIL), and 295–315 (LLYM…LLLF).

Belongs to the CobD/CbiB family.

It is found in the cell membrane. The protein operates within cofactor biosynthesis; adenosylcobalamin biosynthesis. Its function is as follows. Converts cobyric acid to cobinamide by the addition of aminopropanol on the F carboxylic group. This is Cobalamin biosynthesis protein CobD from Listeria monocytogenes serovar 1/2a (strain ATCC BAA-679 / EGD-e).